Reading from the N-terminus, the 181-residue chain is uncharacterized protein (181 aa).

The 159-residue stretch at 1 to 159 (MTVHHFTFHI…KACWMMQSLT (159 aa)) folds into the N-acetyltransferase domain.

It belongs to the acetyltransferase family.

This is an uncharacterized protein from Escherichia coli (strain K12).